A 404-amino-acid chain; its full sequence is MQFPLASAHEDSPPAGLKLRDSCNRCAVSKIKCSKEKPACARCAKQDKVCEYSATKRAGRKRGSRRHNNPVPSPTTQDLPTAAPSTCPTFLEDPETIPLSPRPPFESYPDLFPGIFSIGDDPLIATPITLDTFSFPFDSFSASPISLPTLDVSDGDHLPDAVPLNHLNHPGDRTDVARATALLASDHASASSMDPAAGPQRPPDEPSSGPICGFIRALGLLNGLSSPAWPTSHHPGLDPRPSSRSIMAENEQTVRAISEMLHCQCFDDGYLLAILSMLILKVLSSYATLLRQTPGPDGDGVSWDNSTPPPGEQGAGVDGEDHCRTIAQQILGQLHRVQRLVSILSQRFNIPGGRARTPDSTAGPDLLSSIETLFPVPGSMLEQMEGLLRKRLRTLSAEIVDILR.

Positions 23–50 (CNRCAVSKIKCSKEKPACARCAKQDKVC) form a DNA-binding region, zn(2)-C6 fungal-type. 3 disordered regions span residues 54 to 83 (ATKR…PTAA), 188 to 209 (ASAS…PSSG), and 294 to 318 (PGPD…AGVD). Residues 57-68 (RAGRKRGSRRHN) show a composition bias toward basic residues. The segment covering 74–83 (PTTQDLPTAA) has biased composition (polar residues). Residues 188 to 197 (ASASSMDPAA) are compositionally biased toward low complexity.

It localises to the nucleus. Functionally, transcription factor that regulates the expression of the gene cluster that mediates the biosynthesis of agnestins, dihydroxy-xanthone metabolites. This Paecilomyces divaricatus (Penicillium divaricatum) protein is Agnestins biosynthesis cluster transcription factor AgnL10.